Reading from the N-terminus, the 174-residue chain is Peptide methionine sulfoxide reductase MsrA (174 aa).

Residue cysteine 10 is part of the active site.

Belongs to the MsrA Met sulfoxide reductase family.

It carries out the reaction L-methionyl-[protein] + [thioredoxin]-disulfide + H2O = L-methionyl-(S)-S-oxide-[protein] + [thioredoxin]-dithiol. It catalyses the reaction [thioredoxin]-disulfide + L-methionine + H2O = L-methionine (S)-S-oxide + [thioredoxin]-dithiol. Has an important function as a repair enzyme for proteins that have been inactivated by oxidation. Catalyzes the reversible oxidation-reduction of methionine sulfoxide in proteins to methionine. The chain is Peptide methionine sulfoxide reductase MsrA from Acinetobacter baumannii (strain SDF).